We begin with the raw amino-acid sequence, 137 residues long: BolA-like protein 1 (137 aa).

S81 carries the phosphoserine modification. Residues 114-137 (WRENSQLDTSPPCLGGNKKTLGTP) are disordered.

The protein belongs to the BolA/IbaG family. In terms of assembly, interacts with GLRX5. As to expression, widely expressed.

Its subcellular location is the mitochondrion. In terms of biological role, acts as a mitochondrial iron-sulfur (Fe-S) cluster assembly factor that facilitates (Fe-S) cluster insertion into a subset of mitochondrial proteins. Probably acts together with the monothiol glutaredoxin GLRX5. May protect cells against oxidative stress. The chain is BolA-like protein 1 from Homo sapiens (Human).